Reading from the N-terminus, the 441-residue chain is Amino-acid acetyltransferase (441 aa).

The N-acetyltransferase domain maps to 295–434 (EQVRRATIND…QALYNYQRRS (140 aa)).

It belongs to the acetyltransferase family. ArgA subfamily. In terms of assembly, homohexamer.

It localises to the cytoplasm. The catalysed reaction is L-glutamate + acetyl-CoA = N-acetyl-L-glutamate + CoA + H(+). It participates in amino-acid biosynthesis; L-arginine biosynthesis; N(2)-acetyl-L-ornithine from L-glutamate: step 1/4. The protein is Amino-acid acetyltransferase of Pectobacterium carotovorum subsp. carotovorum (strain PC1).